A 34-amino-acid polypeptide reads, in one-letter code: Photosystem II reaction center protein M (34 aa).

Residues Ile-5–Ile-25 traverse the membrane as a helical segment.

It belongs to the PsbM family. As to quaternary structure, PSII is composed of 1 copy each of membrane proteins PsbA, PsbB, PsbC, PsbD, PsbE, PsbF, PsbH, PsbI, PsbJ, PsbK, PsbL, PsbM, PsbT, PsbX, PsbY, PsbZ, Psb30/Ycf12, at least 3 peripheral proteins of the oxygen-evolving complex and a large number of cofactors. It forms dimeric complexes.

It localises to the plastid. Its subcellular location is the chloroplast thylakoid membrane. Its function is as follows. One of the components of the core complex of photosystem II (PSII). PSII is a light-driven water:plastoquinone oxidoreductase that uses light energy to abstract electrons from H(2)O, generating O(2) and a proton gradient subsequently used for ATP formation. It consists of a core antenna complex that captures photons, and an electron transfer chain that converts photonic excitation into a charge separation. This subunit is found at the monomer-monomer interface. This Calycanthus floridus var. glaucus (Eastern sweetshrub) protein is Photosystem II reaction center protein M.